A 221-amino-acid chain; its full sequence is Large ribosomal subunit protein bL25 (221 aa).

Residues 192 to 221 (APRVEKEETEEDTVAPGDVPAENSKDADEE) are disordered.

Belongs to the bacterial ribosomal protein bL25 family. CTC subfamily. In terms of assembly, part of the 50S ribosomal subunit; part of the 5S rRNA/L5/L18/L25 subcomplex. Contacts the 5S rRNA. Binds to the 5S rRNA independently of L5 and L18.

In terms of biological role, this is one of the proteins that binds to the 5S RNA in the ribosome where it forms part of the central protuberance. This is Large ribosomal subunit protein bL25 from Idiomarina loihiensis (strain ATCC BAA-735 / DSM 15497 / L2-TR).